A 48-amino-acid polypeptide reads, in one-letter code: Large ribosomal subunit protein bL33B (48 aa).

The protein belongs to the bacterial ribosomal protein bL33 family.

The protein is Large ribosomal subunit protein bL33B of Streptococcus thermophilus (strain CNRZ 1066).